We begin with the raw amino-acid sequence, 2812 residues long: Polyunsaturated fatty acid synthase subunit A (2812 aa).

Residues 12-472 form the Ketosynthase family 3 (KS3) domain; the sequence is DTRIAVIGMS…GANYHAVLEE (461 aa). Residues C213, H348, and H390 each act as for beta-ketoacyl synthase activity in the active site. One can recognise a Malonyl-CoA:ACP transacylase (MAT) domain in the interval 602-913; the sequence is LFSGQGAQYT…TVSVNPASGK (312 aa). A coiled-coil region spans residues 1000–1048; it reads DEEAKREAARLQKQLEDAQRQLDEAKRAADEANQKLAAAKEEAKSAAAS. 3 Carrier domains span residues 1114–1193, 1232–1308, and 1342–1418; these read ALLA…KAEI, ERAE…KAEI, and AKAE…KAEI. S1152, S1267, and S1377 each carry O-(pantetheine 4'-phosphoryl)serine. Residues 1422–1442 are disordered; it reads SAPAPAAAAPAPAAPAPAAAA. Over residues 1423-1442 the composition is skewed to low complexity; sequence APAPAAAAPAPAAPAPAAAA. One can recognise a Carrier 4 domain in the interval 1455-1531; sequence AKAETVVMEV…EVVDAMKAEI (77 aa). O-(pantetheine 4'-phosphoryl)serine is present on S1490. Residues 1535–1555 form a disordered region; sequence SAPAPAAAAPAPAAPAPAAAA. Positions 1536–1555 are enriched in low complexity; it reads APAPAAAAPAPAAPAPAAAA. 4 consecutive Carrier domains span residues 1568–1644, 1681–1757, 1792–1868, and 1903–1979; these read AKAE…KAEI. O-(pantetheine 4'-phosphoryl)serine is present on residues S1603, S1716, S1827, and S1938. One can recognise a Ketoreductase (KR) domain in the interval 2257-2484; the sequence is VVSGGARGIT…VKSICFGPWD (228 aa). The interval 2524-2651 is N-terminal hotdog fold; that stretch reads EILVGNWRTP…RAVVVLSSQG (128 aa). Positions 2524–2812 constitute a PKS/mFAS DH domain; the sequence is EILVGNWRTP…SVIATDSLAF (289 aa). Positions 2540-2800 are dehydratase (DH) domain; that stretch reads ETITLHRKIS…NEQGDLFIDV (261 aa). Catalysis depends on H2559, which acts as the Proton acceptor; for dehydratase activity. Residues 2666-2812 are C-terminal hotdog fold; sequence ADPAAQSAVY…SVIATDSLAF (147 aa). Catalysis depends on D2730, which acts as the Proton donor; for dehydratase activity.

Component of the polyunsaturated fatty acid synthase complex composed of at least ORF-A, ORF-B and ORF-C. Requires pantetheine 4'-phosphate as cofactor.

It participates in lipid metabolism; fatty acid biosynthesis. In terms of biological role, poliketide synthase-like protein; part of the polyunsaturated fatty acid synthase composed of the 3 PKS-like subunits A, B and C. While the saturated fatty acids (SFAs) in Thraustochytrium are produced by the conventional fatty acid synthase (FAS) pathway, polyunsaturated fatty acids (PUFAs) including docosahexeanoic acid (DHA) and docosapentaenoic acid (DPA) are synthesized via an anaerobical PKS pathway. PUFA synthase assimilates fatty acyl-CoA, the product of FAS, as the starter unit to synthesize DPA, and this starter unit may be butyryl-CoA, hexanoyl-CoA, or octanoyl-CoA. DPA and DHA biosynthesis seem to differ by the reduction at the N-3 position by PUFA synthase, not the extension of carbon chain. In DHA biosynthesis, PUFA synthase extends the fatty acyl chain from the methyl toward the carboxyl end, and the double bond is formed when the carbon chain is growing, instead of afterward. Therefore, PUFA synthase is unable to transform DPA to DHA, suggesting that DPA is not the precursor of DHA. Moreover, DPA molecule is partly extended by FAS KS domain, so DPA biosynthesis is less dependent on PUFA synthase KS domain than DHA. This Thraustochytrium sp. (strain ATCC 26185 / S-3) protein is Polyunsaturated fatty acid synthase subunit A.